The primary structure comprises 391 residues: Xylose isomerase (391 aa).

Catalysis depends on residues His54 and Asp57. 7 residues coordinate Mg(2+): Glu181, Glu217, His220, Asp245, Asp255, Asp257, and Asp287.

It belongs to the xylose isomerase family. Homotetramer. It depends on Mg(2+) as a cofactor.

The protein localises to the cytoplasm. It catalyses the reaction alpha-D-xylose = alpha-D-xylulofuranose. Its function is as follows. Involved in D-xylose catabolism. This is Xylose isomerase (xylA) from Streptomyces albus G.